We begin with the raw amino-acid sequence, 426 residues long: Protein CgeD (426 aa).

It to B.subtilis spore coat polysaccharide biosynthesis protein SpsA.

Functionally, may be involved in maturation of the outermost layer of the spore. This chain is Protein CgeD (cgeD), found in Bacillus subtilis (strain 168).